Reading from the N-terminus, the 330-residue chain is LIM domain-containing protein pin-2 (330 aa).

LIM zinc-binding domains are found at residues 21 to 73 (CERC…CEHD), 82 to 132 (CAKC…CFLC), 144 to 194 (CNKC…CPRC), 202 to 255 (CFDC…CRDD), and 264 to 315 (CFIC…CKKC).

Expressed in neurons and intestine.

It localises to the cytoplasm. It is found in the nucleus. This chain is LIM domain-containing protein pin-2 (pin-2), found in Caenorhabditis elegans.